The sequence spans 400 residues: Pectinesterase B (400 aa).

Substrate is bound by residues T171 and Q205. The active-site Proton donor is D228. D261 (nucleophile) is an active-site residue. Substrate-binding residues include R325 and W327.

It belongs to the pectinesterase family.

The enzyme catalyses [(1-&gt;4)-alpha-D-galacturonosyl methyl ester](n) + n H2O = [(1-&gt;4)-alpha-D-galacturonosyl](n) + n methanol + n H(+). The protein operates within glycan metabolism; pectin degradation; 2-dehydro-3-deoxy-D-gluconate from pectin: step 1/5. This chain is Pectinesterase B (pemB), found in Pectobacterium parmentieri.